Here is a 300-residue protein sequence, read N- to C-terminus: C-5 sterol desaturase (300 aa).

A run of 4 helical transmembrane segments spans residues 3–23 (DPVLFAIPCFLLLLILEWTAA), 68–88 (SLALLGYAAIYAYLAPWQLSA), 91–111 (WYTWVIAIVGVDLLYYSYHRI), and 147–167 (ILMWVPLPLMGLPPWMVFCSW). In terms of domain architecture, Fatty acid hydroxylase spans 94 to 227 (WVIAIVGVDL…LIIWDRLFGS (134 aa)).

It belongs to the sterol desaturase family.

Its subcellular location is the cell membrane. This is C-5 sterol desaturase (erg3) from Mycobacterium bovis (strain ATCC BAA-935 / AF2122/97).